Reading from the N-terminus, the 92-residue chain is Defensin Lucifensin (92 aa).

Residues 1–23 (MKFFMVFAVTFCLALSFVSQSLA) form the signal peptide. A propeptide spanning residues 24–52 (LPADDEAHFVDGLEALKTIEPELHGRYKR) is cleaved from the precursor. Cystine bridges form between Cys55–Cys82, Cys68–Cys88, and Cys72–Cys90.

The protein belongs to the invertebrate defensin family. Type 1 subfamily. Post-translationally, the disulfide bonds are essential for antimicrobial activity. In terms of tissue distribution, larval fat body, hemolymph and salivary glands (at protein level). Expressed in the salivary glands of all larval stages.

The protein resides in the secreted. It is found in the host cell membrane. In terms of biological role, shows strong antibacterial activity against numerous Gram-positive bacteria. It selectively inhibits peptidoglycan biosynthesis through complex formation with the cell wall precursor lipid II (1:1 molar ratio) thus inhibiting cell wall synthesis. Shows antibacterial activity against the Gram-positive bacteria M.luteus, E.fecalis (MIC=32 mg/L), S.aureus (MIC=16 mg/L), S.carnosus (MIC=2 mg/L), S.pneumoniae (MIC=2 mg/L) and S.pyogenes (MIC=2 mg/L) and against a number of methicillin-resistant S.aureus and glycopeptide-intermediate S.aureus isolates. Does not show antibacterial activity against Gram-negative bacteria or antifungal activity against C.utilis. Shows slight antifungal activity against C.albicans. This Lucilia sericata (Green bottle fly) protein is Defensin Lucifensin.